Reading from the N-terminus, the 387-residue chain is Succinate--CoA ligase [ADP-forming] subunit beta (387 aa).

An ATP-grasp domain is found at K9–E244. ATP-binding positions include K46, G53–G55, E99, C102, and E107. Residues N199 and D213 each contribute to the Mg(2+) site. Substrate is bound by residues N264 and G321–M323.

It belongs to the succinate/malate CoA ligase beta subunit family. Heterotetramer of two alpha and two beta subunits. It depends on Mg(2+) as a cofactor.

It carries out the reaction succinate + ATP + CoA = succinyl-CoA + ADP + phosphate. The enzyme catalyses GTP + succinate + CoA = succinyl-CoA + GDP + phosphate. Its pathway is carbohydrate metabolism; tricarboxylic acid cycle; succinate from succinyl-CoA (ligase route): step 1/1. Functionally, succinyl-CoA synthetase functions in the citric acid cycle (TCA), coupling the hydrolysis of succinyl-CoA to the synthesis of either ATP or GTP and thus represents the only step of substrate-level phosphorylation in the TCA. The beta subunit provides nucleotide specificity of the enzyme and binds the substrate succinate, while the binding sites for coenzyme A and phosphate are found in the alpha subunit. This Ehrlichia chaffeensis (strain ATCC CRL-10679 / Arkansas) protein is Succinate--CoA ligase [ADP-forming] subunit beta.